The chain runs to 125 residues: uncharacterized protein (125 aa).

This is an uncharacterized protein from Mycoplasma (Bacteriophage L2).